The chain runs to 509 residues: MSSHIQIFDTTLRDGEQTPGVNFTFDERLRIALQLEKWGVDVIEAGFPASSTGSFKSVQAIAQTLTTTAVCGLARCKKSDIDAVYEATKDAAKPVVHVFIATSPIHLEHKLKMSQEDVLASIKEHVTYAKQLFDVVQFSPEDATRTELPFLVKCVQTAVDAGATVINIPDTVGYSYHDEYAHIFKTLTESATSSNEIIYSAHCHDDLGMAVSNSLAAIEGGARRIEGTVNGIGERAGNAALEEVALALYVRNDHYGAQTALNLEETKKTSDLISRYAGIRVPRNKAIVGQNAFSHESGIHQDGVLKHRETYEIMTPQLVGVSMTELPLGKLSGKHAFSEKLKALGYDIDKEAQIDLFKQFKAIADKKKSVSDRDIHAIIQGSEHEHQALYKLETLQLQYVSSGLQSAVVVVKDKEGHIYQDSSIGTGSIVAIYNAVDRIFQKETELIDYRINSVTEGTDAQAEVHVNLLIEGKTVNGFGIDHDILQASCKAYVEAHAKFAAENVEKVGN.

The 263-residue stretch at 5–267 (IQIFDTTLRD…QTALNLEETK (263 aa)) folds into the Pyruvate carboxyltransferase domain. The Mn(2+) site is built by aspartate 14, histidine 202, histidine 204, and asparagine 238. The regulatory domain stretch occupies residues 391–509 (KLETLQLQYV…AAENVEKVGN (119 aa)).

It belongs to the alpha-IPM synthase/homocitrate synthase family. LeuA type 1 subfamily. Homodimer. The cofactor is Mn(2+).

It localises to the cytoplasm. It catalyses the reaction 3-methyl-2-oxobutanoate + acetyl-CoA + H2O = (2S)-2-isopropylmalate + CoA + H(+). It functions in the pathway amino-acid biosynthesis; L-leucine biosynthesis; L-leucine from 3-methyl-2-oxobutanoate: step 1/4. Its function is as follows. Catalyzes the condensation of the acetyl group of acetyl-CoA with 3-methyl-2-oxobutanoate (2-ketoisovalerate) to form 3-carboxy-3-hydroxy-4-methylpentanoate (2-isopropylmalate). The sequence is that of 2-isopropylmalate synthase from Staphylococcus aureus (strain bovine RF122 / ET3-1).